The following is a 463-amino-acid chain: 23S rRNA (uracil(1939)-C(5))-methyltransferase RlmD (463 aa).

One can recognise a TRAM domain in the interval 6 to 76; it reads KSRKPQQPEY…KRLEEAEMVE (71 aa). [4Fe-4S] cluster contacts are provided by Cys-90, Cys-96, Cys-99, and Cys-178. S-adenosyl-L-methionine contacts are provided by Gln-288, Phe-317, Asn-322, Glu-341, Asp-368, and Asp-389. Residue Cys-415 is the Nucleophile of the active site.

Belongs to the class I-like SAM-binding methyltransferase superfamily. RNA M5U methyltransferase family. RlmD subfamily.

The catalysed reaction is uridine(1939) in 23S rRNA + S-adenosyl-L-methionine = 5-methyluridine(1939) in 23S rRNA + S-adenosyl-L-homocysteine + H(+). Its function is as follows. Catalyzes the formation of 5-methyl-uridine at position 1939 (m5U1939) in 23S rRNA. In Acinetobacter baumannii (strain AYE), this protein is 23S rRNA (uracil(1939)-C(5))-methyltransferase RlmD.